The primary structure comprises 281 residues: Insecticidal crystal toxin protein (281 aa).

Antigenic epitope stretches follow at residues 54–78 (NYSH…VYTF), 91–104 (IYTH…AVKA), 108–116 (GTASKVVQG), 131–148 (FKIT…FIRI), 160–172 (AVIN…VAEL), 189–196 (KYKDFQYL), 208–216 (QNISLVFNR), 221–236 (TNTT…LPIT), and 247–256 (KLETVQQIIN).

This sequence belongs to the delta endotoxin family.

In terms of biological role, promotes colloidosmotic lysis by binding to the midgut epithelial cells of insects. Active against Mamestra brassicae. This chain is Insecticidal crystal toxin protein, found in Bacillus thuringiensis subsp. kurstaki.